The sequence spans 465 residues: Cysteine--tRNA ligase 2 (465 aa).

Residue Cys30 participates in Zn(2+) binding. The 'HIGH' region signature appears at 32 to 42 (ITVYDYCHVGH). Zn(2+)-binding residues include Cys214, His239, and Glu243. A 'KMSKS' region motif is present at residues 271–275 (KMSKS). An ATP-binding site is contributed by Lys274.

The protein belongs to the class-I aminoacyl-tRNA synthetase family. As to quaternary structure, monomer. Zn(2+) is required as a cofactor.

The protein resides in the cytoplasm. It catalyses the reaction tRNA(Cys) + L-cysteine + ATP = L-cysteinyl-tRNA(Cys) + AMP + diphosphate. This chain is Cysteine--tRNA ligase 2, found in Burkholderia lata (strain ATCC 17760 / DSM 23089 / LMG 22485 / NCIMB 9086 / R18194 / 383).